Reading from the N-terminus, the 393-residue chain is Chalcone synthase G (393 aa).

C164 is an active-site residue.

Belongs to the thiolase-like superfamily. Chalcone/stilbene synthases family. As to expression, expressed in seedlings after illumination with UV light. No expression detectable in flowers. It is not known for sure whether CHSG encodes a chalcone synthase or a very closely related condensing enzyme.

The enzyme catalyses (E)-4-coumaroyl-CoA + 3 malonyl-CoA + 3 H(+) = 2',4,4',6'-tetrahydroxychalcone + 3 CO2 + 4 CoA. The protein operates within secondary metabolite biosynthesis; flavonoid biosynthesis. Its function is as follows. The primary product of this enzyme is 4,2',4',6'-tetrahydroxychalcone (also termed naringenin-chalcone or chalcone) which can under specific conditions spontaneously isomerize into naringenin. In Petunia hybrida (Petunia), this protein is Chalcone synthase G (CHSG).